The following is an 81-amino-acid chain: Photosystem I iron-sulfur center (81 aa).

2 4Fe-4S ferredoxin-type domains span residues 2–31 and 39–68; these read SHSV…MIPW and IASA…VRVY. Positions 11, 14, 17, 21, 48, 51, 54, and 58 each coordinate [4Fe-4S] cluster.

The eukaryotic PSI reaction center is composed of at least 11 subunits. [4Fe-4S] cluster serves as cofactor.

Its subcellular location is the plastid. The protein localises to the chloroplast thylakoid membrane. It catalyses the reaction reduced [plastocyanin] + hnu + oxidized [2Fe-2S]-[ferredoxin] = oxidized [plastocyanin] + reduced [2Fe-2S]-[ferredoxin]. Functionally, apoprotein for the two 4Fe-4S centers FA and FB of photosystem I (PSI); essential for photochemical activity. FB is the terminal electron acceptor of PSI, donating electrons to ferredoxin. The C-terminus interacts with PsaA/B/D and helps assemble the protein into the PSI complex. Required for binding of PsaD and PsaE to PSI. PSI is a plastocyanin-ferredoxin oxidoreductase, converting photonic excitation into a charge separation, which transfers an electron from the donor P700 chlorophyll pair to the spectroscopically characterized acceptors A0, A1, FX, FA and FB in turn. The protein is Photosystem I iron-sulfur center of Acorus calamus (Sweet flag).